The primary structure comprises 221 residues: CASP-like protein 2U10 (221 aa).

The disordered stretch occupies residues 1–22 (MDSSSKPMNGSAGGSPVGDERK). Topologically, residues 1–31 (MDSSSKPMNGSAGGSPVGDERKMGDHEHEFR) are cytoplasmic. The chain crosses the membrane as a helical span at residues 32–52 (ISIILLRSFLLVLVIISEALM). Over 53–91 (VTDRETGSVPLPFFGLPRPVFVTKTAKYELVTGLKFYVD) the chain is Extracellular. A helical membrane pass occupies residues 92–112 (ALGVVIGYTVLHLLFNIGLVA). Topologically, residues 113–122 (TKGTVVDCKS) are cytoplasmic. A helical transmembrane segment spans residues 123 to 143 (VAWISFIADSMMGYLLLSSAA). Residues 144–174 (VATEIGYLAEEGAPAVLWRKVCNAFGYFCTV) lie on the Extracellular side of the membrane. The chain crosses the membrane as a helical span at residues 175-195 (YAISVVICFIAALVSFVVVGI). Residues 196-221 (SAYHLFRLYGIQQQAAREKEKLSAEM) are Cytoplasmic-facing.

This sequence belongs to the Casparian strip membrane proteins (CASP) family. As to quaternary structure, homodimer and heterodimers.

The protein localises to the cell membrane. In Selaginella moellendorffii (Spikemoss), this protein is CASP-like protein 2U10.